Consider the following 297-residue polypeptide: Cell death peptidase (297 aa).

2 helical membrane-spanning segments follow: residues 61–82 and 149–178; these read IVLT…WVFT and IFLC…AFST.

Belongs to the peptidase U49 family.

It is found in the cell membrane. Its function is as follows. Interacts with a short DNA sequence about one-quarter of the way into the major capsid protein gene 23 of T4; general translation inhibition occurs when this late gene of the virus is expressed. In Escherichia coli (strain K12), this protein is Cell death peptidase (lit).